A 474-amino-acid chain; its full sequence is ATP synthase subunit beta (474 aa).

152 to 159 contacts ATP; that stretch reads GGAGVGKT.

It belongs to the ATPase alpha/beta chains family. In terms of assembly, F-type ATPases have 2 components, CF(1) - the catalytic core - and CF(0) - the membrane proton channel. CF(1) has five subunits: alpha(3), beta(3), gamma(1), delta(1), epsilon(1). CF(0) has three main subunits: a(1), b(2) and c(9-12). The alpha and beta chains form an alternating ring which encloses part of the gamma chain. CF(1) is attached to CF(0) by a central stalk formed by the gamma and epsilon chains, while a peripheral stalk is formed by the delta and b chains.

The protein resides in the cell inner membrane. It catalyses the reaction ATP + H2O + 4 H(+)(in) = ADP + phosphate + 5 H(+)(out). In terms of biological role, produces ATP from ADP in the presence of a proton gradient across the membrane. The catalytic sites are hosted primarily by the beta subunits. This chain is ATP synthase subunit beta, found in Paramagnetospirillum magneticum (strain ATCC 700264 / AMB-1) (Magnetospirillum magneticum).